The chain runs to 325 residues: Acetyl-coenzyme A carboxylase carboxyl transferase subunit alpha (325 aa).

Residues 35–292 (EIEKLEARLT…DRVLRASLKQ (258 aa)) enclose the CoA carboxyltransferase C-terminal domain.

This sequence belongs to the AccA family. As to quaternary structure, acetyl-CoA carboxylase is a heterohexamer composed of biotin carboxyl carrier protein (AccB), biotin carboxylase (AccC) and two subunits each of ACCase subunit alpha (AccA) and ACCase subunit beta (AccD).

Its subcellular location is the cytoplasm. It catalyses the reaction N(6)-carboxybiotinyl-L-lysyl-[protein] + acetyl-CoA = N(6)-biotinyl-L-lysyl-[protein] + malonyl-CoA. It functions in the pathway lipid metabolism; malonyl-CoA biosynthesis; malonyl-CoA from acetyl-CoA: step 1/1. In terms of biological role, component of the acetyl coenzyme A carboxylase (ACC) complex. First, biotin carboxylase catalyzes the carboxylation of biotin on its carrier protein (BCCP) and then the CO(2) group is transferred by the carboxyltransferase to acetyl-CoA to form malonyl-CoA. The sequence is that of Acetyl-coenzyme A carboxylase carboxyl transferase subunit alpha from Geobacillus thermodenitrificans (strain NG80-2).